The sequence spans 482 residues: tRNA sulfurtransferase (482 aa).

The THUMP domain maps to 61 to 165 (LAIRDALTRI…DDRLLLIKGR (105 aa)). ATP-binding positions include 183 to 184 (LI), K265, G287, and Q296. A disulfide bond links C344 and C456. One can recognise a Rhodanese domain in the interval 404–482 (FGANDVILDI…GFANVKVYRP (79 aa)). The active-site Cysteine persulfide intermediate is the C456.

Belongs to the ThiI family.

It is found in the cytoplasm. It carries out the reaction [ThiI sulfur-carrier protein]-S-sulfanyl-L-cysteine + a uridine in tRNA + 2 reduced [2Fe-2S]-[ferredoxin] + ATP + H(+) = [ThiI sulfur-carrier protein]-L-cysteine + a 4-thiouridine in tRNA + 2 oxidized [2Fe-2S]-[ferredoxin] + AMP + diphosphate. The enzyme catalyses [ThiS sulfur-carrier protein]-C-terminal Gly-Gly-AMP + S-sulfanyl-L-cysteinyl-[cysteine desulfurase] + AH2 = [ThiS sulfur-carrier protein]-C-terminal-Gly-aminoethanethioate + L-cysteinyl-[cysteine desulfurase] + A + AMP + 2 H(+). It functions in the pathway cofactor biosynthesis; thiamine diphosphate biosynthesis. Catalyzes the ATP-dependent transfer of a sulfur to tRNA to produce 4-thiouridine in position 8 of tRNAs, which functions as a near-UV photosensor. Also catalyzes the transfer of sulfur to the sulfur carrier protein ThiS, forming ThiS-thiocarboxylate. This is a step in the synthesis of thiazole, in the thiamine biosynthesis pathway. The sulfur is donated as persulfide by IscS. This chain is tRNA sulfurtransferase, found in Salmonella arizonae (strain ATCC BAA-731 / CDC346-86 / RSK2980).